A 497-amino-acid chain; its full sequence is Serine hydroxymethyltransferase (497 aa).

(6S)-5,6,7,8-tetrahydrofolate contacts are provided by residues Leu-176 and 180–182 (GHL). Lys-289 is modified (N6-(pyridoxal phosphate)lysine).

It belongs to the SHMT family. As to quaternary structure, homodimer. The cofactor is pyridoxal 5'-phosphate.

Its subcellular location is the cytoplasm. It catalyses the reaction (6R)-5,10-methylene-5,6,7,8-tetrahydrofolate + glycine + H2O = (6S)-5,6,7,8-tetrahydrofolate + L-serine. It functions in the pathway one-carbon metabolism; tetrahydrofolate interconversion. It participates in amino-acid biosynthesis; glycine biosynthesis; glycine from L-serine: step 1/1. Functionally, catalyzes the reversible interconversion of serine and glycine with tetrahydrofolate (THF) serving as the one-carbon carrier. This reaction serves as the major source of one-carbon groups required for the biosynthesis of purines, thymidylate, methionine, and other important biomolecules. Also exhibits THF-independent aldolase activity toward beta-hydroxyamino acids, producing glycine and aldehydes, via a retro-aldol mechanism. This chain is Serine hydroxymethyltransferase, found in Chlamydia trachomatis serovar A (strain ATCC VR-571B / DSM 19440 / HAR-13).